The chain runs to 269 residues: Phosphonoacetaldehyde hydrolase (269 aa).

The active-site Nucleophile is aspartate 10. Mg(2+)-binding residues include aspartate 10 and alanine 12. The active-site Schiff-base intermediate with substrate is lysine 52. Aspartate 186 contacts Mg(2+).

This sequence belongs to the HAD-like hydrolase superfamily. PhnX family. Homodimer. It depends on Mg(2+) as a cofactor.

It carries out the reaction phosphonoacetaldehyde + H2O = acetaldehyde + phosphate + H(+). Its function is as follows. Involved in phosphonate degradation. The polypeptide is Phosphonoacetaldehyde hydrolase (Salmonella typhi).